The sequence spans 521 residues: Cell adhesion molecule CEACAM1 (521 aa).

Residues 1–34 (MELASAHLHKGQVPWGGLLLTASLLASWSPATTA) form the signal peptide. Residues 35-142 (EVTIEAVPPQ…QATVRFHVHP (108 aa)) enclose the Ig-like V-type domain. Topologically, residues 35–428 (EVTIEAVPPQ…GGLSDGAIAG (394 aa)) are extracellular. The required for homophilic binding stretch occupies residues 39-142 (EAVPPQVAED…QATVRFHVHP (104 aa)). Residues N71, N89, N104, N148, N152, N199, N206, N210, N226, N258, N290, N294, N304, N317, N333, and N375 are each glycosylated (N-linked (GlcNAc...) asparagine). Ig-like C2-type domains follow at residues 147 to 234 (PNIT…FSLN), 239 to 319 (PDTP…KNIT), and 323 to 411 (PVTQ…IKLD). The cysteines at positions 167 and 217 are disulfide-linked. C261 and C301 form a disulfide bridge. C346 and C394 form a disulfide bridge. Residues 429 to 447 (IVIGVVAGVALIAGLAYFL) form a helical membrane-spanning segment. The interval 445–457 (YFLYSRKSGGGSD) is interaction with calmodulin. Residues 447-521 (LYSRKSGGGS…ETVYSEVKKK (75 aa)) form an interaction with FLNA region. Residues 448-521 (YSRKSGGGSD…ETVYSEVKKK (74 aa)) are Cytoplasmic-facing. The tract at residues 455-521 (GSDQRDLTEH…ETVYSEVKKK (67 aa)) is disordered. Residues 457-466 (DQRDLTEHKP) are compositionally biased toward basic and acidic residues. Residues 467–481 (STSNHNLAPSDNSPN) are compositionally biased toward polar residues. The segment at 484-521 (DDVAYTVLNFNSQQPNRPTSAPSSPRATETVYSEVKKK) is required for interaction with PTPN11 and PTPN6 and for control of phosphorylation level. Residue Y488 is modified to Phosphotyrosine; by SRC, LCK, INSR and EGFR. Positions 491 to 514 (LNFNSQQPNRPTSAPSSPRATETV) are enriched in polar residues. At S503 the chain carries Phosphoserine. At Y515 the chain carries Phosphotyrosine; by INSR, SRC and LCK. The essential for interaction with PTPN11 and PTPN6 stretch occupies residues 515–518 (YSEV).

It belongs to the immunoglobulin superfamily. CEA family. As to quaternary structure, (Microbial infection) Interacts with MHV S1 spike glycoprotein. In terms of assembly, monomer. Oligomer. Heterodimer. Homodimer. Cis-dimer/oligomer (via Ig-like C2-type and/or via cytoplasmic domains); induced by trans-homophilic cell adhesion through an allosteric mechanism transmitted by the Ig-like V-type domain, and is regulated by intracellular calcium and calmodulin. Interacts (via cytoplasmic domain) with calmodulin in a calcium dependent manner; reduces homophilic cell adhesion through dissociation of dimer. Isoform 1 interacts (via cytoplasmic domain) with PTPN11 (preferentially) and PTPN6; cis-homodimer form is preferred; this interaction is decreased by formation of isoform 1 / isoform 2 cis-heterodimers and is dependent on the monomer/dimer equilibrium; this interaction is phosphorylation-dependent. Isoform 1 interacts with LYN. Isoform 1 interacts (via cytoplasmic domain) with SRC (via SH2 domain); this interaction is regulated by trans-homophilic cell adhesion. Isoform 1 interacts with LCK; mediates phosphorylation at Tyr-488 and Tyr-515 resulting in PTPN6 association. Isoform 1 interacts with PTPN6; this interaction is phosphorylation-dependent and causes a profound decrease in TCR stimulation-induced CD247 and ZAP70 phosphorylation. Isoform 1 interacts with TCR/CD3 complex through TCR beta chain and CD3E; colocalizes at the cell surface and upon stimulation of the TCR/CD3 complex recruits PTPN6 in the TCR/CD3 complex, resulting in dephosphorylation of CD247 and ZAP70. Isoform 1 interacts (via cytoplasmic domain) with SHC1 (via SH2 domain); SHC1 mediates interaction with INSR or EGFR in a Ser-503 phosphorylation-dependent manner. Isoform 1 interacts with EGFR; the interaction is indirect. Isoform 1 interacts with CSF3R; down-regulates the CSF3R-STAT3 pathway through recruitment of PTPN6 that dephosphorylates CSF3R. Isoform 1 (phosphorylated form) interacts with TLR4 and SYK; recruits PTPN6 that dephosphorylates SYK, reducing the production of reactive oxygen species (ROS) and lysosome disruption, leading to a reduction of the inflammasome activity. Isoform 1 interacts with FLNA; inhibits cell migration and cell scattering by interfering with the interaction of FLNA with RALA. Isoform 1 interacts (via cytoplasmic domain) with PXN; the interaction is phosphotyrosyl-dependent. Isoform 1 interacts with KLRK1; recruits PTPN6 that dephosphorylates VAV1. Isoform 1 interacts with CEACAM8. Isoform 1 interacts with FASN; this interaction is insulin and phosphorylation-dependent; reduces fatty-acid synthase activity. Interacts (via Ig-like V-type) with HAVCR2 (via Ig-like V-type); facilitates the maturation and cell surface expression of HAVCR2 thereby regulating T-cell tolerance induction. Isoform 2 interacts (via the cytoplasmic domain) with ANXA2; this interaction is regulated by phosphorylation and appears in the AIIt complex. Interacts (via Lewis X moieties) with CD209 (via C-type lectin domain); this interaction is regulated by the glycosylation pattern of CEACAM1 on cell types and regulates contact between dendritic cells and neutrophils. Post-translationally, phosphorylated on serine and tyrosine. Isoform 1 is phosphorylated on tyrosine by Src family kinases like SRC and LCK and by receptor like CSF3R, EGFR and INSR upon stimulation. Phosphorylated at Ser-503; mediates activity. Phosphorylated at Tyr-488; regulates activity. Phosphorylated at Tyr-488 by EGFR and INSR upon stimulation; this phosphorylation is Ser-503-phosphorylation-dependent; mediates cellular internalization; increases interaction with FASN. Phosphorylated at Tyr-488 and Tyr-515 by LCK; mediates PTPN6 association and is regulated by homophilic ligation of CEACAM1 in the absence of T-cell activation. Phosphorylated at Tyr-515; mediates interaction with PTPN11. In terms of processing, phosphorylated on serine and threonine. As to expression, expressed in granulocytes, lymphocytes, granulocytes, B cells, and T-cells. Expressed in bone. Highly expressed in liver and femur. Highly expressed in neutrophils, and to a lesser extent inmonocytes, and macrophages. Slightly higher expressed in peripheral blood neutrophils (PBNs). Intestinal T-cells predominantly express isoform 2 while extraintestinal T-cells mainly express isoform 1. Expressed in small intestine and colon.

It localises to the cell membrane. Its subcellular location is the lateral cell membrane. The protein localises to the apical cell membrane. It is found in the basal cell membrane. The protein resides in the cell junction. It localises to the adherens junction. Its subcellular location is the cytoplasmic vesicle. The protein localises to the secretory vesicle. It is found in the cell projection. The protein resides in the microvillus membrane. Its function is as follows. Cell adhesion protein that mediates homophilic cell adhesion in a calcium-independent manner. Plays a role as coinhibitory receptor in immune response, insulin action and also functions as an activator during angiogenesis. Its coinhibitory receptor function is phosphorylation- and PTPN6 -dependent, which in turn, suppress signal transduction of associated receptors by dephosphorylation of their downstream effectors. Plays a role in immune response, of T-cells, natural killer (NK) and neutrophils. Upon TCR/CD3 complex stimulation, inhibits TCR-mediated cytotoxicity by blocking granule exocytosis by mediating homophilic binding to adjacent cells, allowing interaction with and phosphorylation by LCK and interaction with the TCR/CD3 complex which recruits PTPN6 resulting in dephosphorylation of CD247 and ZAP70. Also inhibits T-cell proliferation and cytokine production through inhibition of JNK cascade and plays a crucial role in regulating autoimmunity and anti-tumor immunity by inhibiting T-cell through its interaction with HAVCR2. Upon natural killer (NK) cells activation, inhibit KLRK1-mediated cytolysis of CEACAM1-bearing tumor cells by trans-homophilic interactions with CEACAM1 on the target cell and lead to cis-interaction between CEACAM1 and KLRK1, allowing PTPN6 recruitment and then VAV1 dephosphorylation. Upon neutrophils activation negatively regulates IL1B production by recruiting PTPN6 to a SYK-TLR4-CEACAM1 complex, that dephosphorylates SYK, reducing the production of reactive oxygen species (ROS) and lysosome disruption, which in turn, reduces the activity of the inflammasome. Down-regulates neutrophil production by acting as a coinhibitory receptor for CSF3R by downregulating the CSF3R-STAT3 pathway through recruitment of PTPN6 that dephosphorylates CSF3R. Also regulates insulin action by promoting INS clearance and regulating lipogenesis in liver through regulating insulin signaling. Upon INS stimulation, undergoes phosphorylation by INSR leading to INS clearance by increasing receptor-mediated insulin endocytosis. This inernalization promotes interaction with FASN leading to receptor-mediated insulin degradation and to reduction of FASN activity leading to negative regulation of fatty acid synthesis. INSR-mediated phosphorylation also provokes a down-regulation of cell proliferation through SHC1 interaction resulting in decrease coupling of SHC1 to the MAPK3/ERK1-MAPK1/ERK2 and phosphatidylinositol 3-kinase pathways. Functions as activator in angiogenesis by promoting blood vessel remodeling through endothelial cell differentiation and migration and in arteriogenesis by increasing the number of collateral arteries and collateral vessel calibers after ischemia. Also regulates vascular permeability through the VEGFR2 signaling pathway resulting in control of nitric oxide production. Down-regulates cell growth in response to EGF through its interaction with SHC1 that mediates interaction with EGFR resulting in decrease coupling of SHC1 to the MAPK3/ERK1-MAPK1/ERK2 pathway. Negatively regulates platelet aggregation by decreasing platelet adhesion on type I collagen through the GPVI-FcRgamma complex. Inhibits cell migration and cell scattering through interaction with FLNA; interferes with the interaction of FLNA with RALA. Mediates bile acid transport activity in a phosphorylation dependent manner. Negatively regulates osteoclastogenesis. Functionally, cell adhesion protein that mediates homophilic cell adhesion in a calcium-independent manner. Promotes populations of T-cells regulating IgA production and secretion associated with control of the commensal microbiota and resistance to enteropathogens. In terms of biological role, (Microbial infection) In case of murine coronavirus (MHV) infection, serves as receptor for MHV S1 spike glycoprotein. This Mus musculus (Mouse) protein is Cell adhesion molecule CEACAM1.